Here is a 333-residue protein sequence, read N- to C-terminus: Holliday junction branch migration complex subunit RuvB (333 aa).

Positions 1–182 (MEERIVSAEA…FGVMARLEYY (182 aa)) are large ATPase domain (RuvB-L). ATP-binding positions include L21, R22, G63, K66, T67, T68, 129 to 131 (EDF), R172, Y182, and R219. Mg(2+) is bound at residue T67. The interval 183-253 (KPEELAQIVE…RACSALEQLH (71 aa)) is small ATPAse domain (RuvB-S). Positions 256–333 (PLGLDHIDDK…AHYGVEKQNG (78 aa)) are head domain (RuvB-H). Positions 311 and 316 each coordinate DNA.

This sequence belongs to the RuvB family. As to quaternary structure, homohexamer. Forms an RuvA(8)-RuvB(12)-Holliday junction (HJ) complex. HJ DNA is sandwiched between 2 RuvA tetramers; dsDNA enters through RuvA and exits via RuvB. An RuvB hexamer assembles on each DNA strand where it exits the tetramer. Each RuvB hexamer is contacted by two RuvA subunits (via domain III) on 2 adjacent RuvB subunits; this complex drives branch migration. In the full resolvosome a probable DNA-RuvA(4)-RuvB(12)-RuvC(2) complex forms which resolves the HJ.

The protein resides in the cytoplasm. The catalysed reaction is ATP + H2O = ADP + phosphate + H(+). In terms of biological role, the RuvA-RuvB-RuvC complex processes Holliday junction (HJ) DNA during genetic recombination and DNA repair, while the RuvA-RuvB complex plays an important role in the rescue of blocked DNA replication forks via replication fork reversal (RFR). RuvA specifically binds to HJ cruciform DNA, conferring on it an open structure. The RuvB hexamer acts as an ATP-dependent pump, pulling dsDNA into and through the RuvAB complex. RuvB forms 2 homohexamers on either side of HJ DNA bound by 1 or 2 RuvA tetramers; 4 subunits per hexamer contact DNA at a time. Coordinated motions by a converter formed by DNA-disengaged RuvB subunits stimulates ATP hydrolysis and nucleotide exchange. Immobilization of the converter enables RuvB to convert the ATP-contained energy into a lever motion, pulling 2 nucleotides of DNA out of the RuvA tetramer per ATP hydrolyzed, thus driving DNA branch migration. The RuvB motors rotate together with the DNA substrate, which together with the progressing nucleotide cycle form the mechanistic basis for DNA recombination by continuous HJ branch migration. Branch migration allows RuvC to scan DNA until it finds its consensus sequence, where it cleaves and resolves cruciform DNA. This Shouchella clausii (strain KSM-K16) (Alkalihalobacillus clausii) protein is Holliday junction branch migration complex subunit RuvB.